A 425-amino-acid polypeptide reads, in one-letter code: Peroxisomal membrane protein PEX14 (425 aa).

Disordered stretches follow at residues 49–89 (RSQG…YRNA) and 247–425 (DEPI…AAQS). Over residues 56–76 (SSSVASQVSSYSPSASQSSVA) the composition is skewed to low complexity. The SH3-binding signature appears at 89–97 (APPLPERDW). Residues 256–297 (PSLTTGANSLTSESSGRSSIPHSQSVPIRTQLTTPPSDSDTS) show a composition bias toward polar residues. 2 stretches are compositionally biased toward basic and acidic residues: residues 315 to 324 (DILRKEKNRT) and 333 to 366 (LGKD…PEED).

It belongs to the peroxin-14 family. In terms of assembly, interacts with PEX13 (via SH3 domain); forming the PEX13-PEX14 docking complex. Interacts with PEX5 (via WxxxF/Y motifs). Interacts with PEX20 (via WxxxF/Y motifs). Interacts with PEX3, PEX7, PEX8 and PEX17. Phosphorylated on serine or threonine residues.

The protein localises to the peroxisome membrane. Functionally, component of the PEX13-PEX14 docking complex, a translocon channel that specifically mediates the import of peroxisomal cargo proteins bound to PEX5 or PEX20 receptors. The PEX13-PEX14 docking complex forms a large import pore which can be opened to a diameter of about 9 nm. Mechanistically, PEX5 (or PEX20) receptor along with cargo proteins associates with the PEX14 subunit of the PEX13-PEX14 docking complex in the cytosol, leading to the insertion of the receptor into the organelle membrane with the concomitant translocation of the cargo into the peroxisome matrix. The chain is Peroxisomal membrane protein PEX14 from Komagataella pastoris (Yeast).